A 145-amino-acid chain; its full sequence is Hemoglobin subunit beta (145 aa).

In terms of domain architecture, Globin spans 1-145 (MLTAEEKAAV…VANALAHRYH (145 aa)). Position 11 is a phosphothreonine (Thr11). Ser43 bears the Phosphoserine mark. Lys58 carries the N6-acetyllysine modification. Residue His62 participates in heme b binding. Lys81 carries the post-translational modification N6-acetyllysine. Residue His91 coordinates heme b. S-nitrosocysteine is present on Cys92.

This sequence belongs to the globin family. As to quaternary structure, heterotetramer of two alpha chains and two beta chains. As to expression, red blood cells.

Its function is as follows. Involved in oxygen transport from the lung to the various peripheral tissues. This chain is Hemoglobin subunit beta (HBB), found in Tragelaphus strepsiceros (Greater kudu).